The primary structure comprises 139 residues: ATP synthase epsilon chain (139 aa).

It belongs to the ATPase epsilon chain family. In terms of assembly, F-type ATPases have 2 components, CF(1) - the catalytic core - and CF(0) - the membrane proton channel. CF(1) has five subunits: alpha(3), beta(3), gamma(1), delta(1), epsilon(1). CF(0) has three main subunits: a, b and c.

It localises to the cell inner membrane. Produces ATP from ADP in the presence of a proton gradient across the membrane. This chain is ATP synthase epsilon chain, found in Serratia proteamaculans (strain 568).